The chain runs to 335 residues: Acetyl-coenzyme A carboxylase carboxyl transferase subunit alpha (335 aa).

The CoA carboxyltransferase C-terminal domain maps to 38 to 292; sequence TLEQKAEELR…ATALSEEIEN (255 aa).

This sequence belongs to the AccA family. As to quaternary structure, acetyl-CoA carboxylase is a heterohexamer composed of biotin carboxyl carrier protein (AccB), biotin carboxylase (AccC) and two subunits each of ACCase subunit alpha (AccA) and ACCase subunit beta (AccD).

It localises to the cytoplasm. It carries out the reaction N(6)-carboxybiotinyl-L-lysyl-[protein] + acetyl-CoA = N(6)-biotinyl-L-lysyl-[protein] + malonyl-CoA. It functions in the pathway lipid metabolism; malonyl-CoA biosynthesis; malonyl-CoA from acetyl-CoA: step 1/1. Component of the acetyl coenzyme A carboxylase (ACC) complex. First, biotin carboxylase catalyzes the carboxylation of biotin on its carrier protein (BCCP) and then the CO(2) group is transferred by the carboxyltransferase to acetyl-CoA to form malonyl-CoA. The polypeptide is Acetyl-coenzyme A carboxylase carboxyl transferase subunit alpha (Heliobacterium modesticaldum (strain ATCC 51547 / Ice1)).